Consider the following 609-residue polypeptide: MTSATIPGLDTAPTNHQGLLSWVQEVAELTQPDRVVFADGSDEEFHRLSAQLVDAGTFTRLNDEKFPNSYLALSDPSDVARVESRTFICSEREIDAGPTNNWMNPSEMRTLMTDLYRGCMRGRTMYVVPFCMGPLGAEDPKLGVEITDSEYVVVSMKVMTRMGTAALEKMGQDGFFVKALHSVGAPLEDGQADVPWPCSDTKYITHFPETREIWSYGSGYGGNALLGKKCYSLRIASAMARDEGWLAEHMLILKLISPENKAYYIAAAFPSACGKTNLAMLQPTIPGWRAETLGDDIAWMRFGKDGRLYAVNPEFGFFGVAPGTNWKSNPNAMRTIAAGNTVFTNVALTDDGEVWWEGLEGDPQHLVDWKGNEWYFRETETTAAHPNSRYCTPMSQCPILAPEWDDPQGVPISAILFGGRRKTTVPLVTQARDWQHGVFIGATLGSEQTAAAEGKVGNVRRDPMAMLPFMGYNVGDYVQHWIDIGKNSDESKLPQVFFVNWFRRGEDHRFLWPGFGENSRVMKWIVDRIEHKAGGKTTPIGTVPTVEDLDLEGLDANPADVSEALAVNAQEWREELPLIEEWLQFIGEKLPTGIKDEFDALKERLRDAE.

Substrate contacts are provided by residues arginine 81 and 220 to 222; that span reads YGG. Residues lysine 229 and histidine 249 each coordinate Mn(2+). Serine 271 serves as a coordination point for substrate. 272 to 277 provides a ligand contact to GTP; that stretch reads ACGKTN. The active site involves cysteine 273. Aspartate 296 provides a ligand contact to Mn(2+). 387–389 provides a ligand contact to substrate; it reads NSR. GTP contacts are provided by residues arginine 389, arginine 420, and 515–518; that span reads FGEN.

The protein belongs to the phosphoenolpyruvate carboxykinase [GTP] family. In terms of assembly, monomer. The cofactor is Mn(2+).

Its subcellular location is the cytoplasm. The enzyme catalyses oxaloacetate + GTP = phosphoenolpyruvate + GDP + CO2. It functions in the pathway carbohydrate biosynthesis; gluconeogenesis. In terms of biological role, catalyzes the conversion of oxaloacetate (OAA) to phosphoenolpyruvate (PEP), the rate-limiting step in the metabolic pathway that produces glucose from lactate and other precursors derived from the citric acid cycle. This Mycobacterium ulcerans (strain Agy99) protein is Phosphoenolpyruvate carboxykinase [GTP].